The chain runs to 1219 residues: A disintegrin and metalloproteinase with thrombospondin motifs 18 (1219 aa).

The first 47 residues, methionine 1–alanine 47, serve as a signal peptide directing secretion. Positions serine 48–arginine 284 are excised as a propeptide. 2 N-linked (GlcNAc...) asparagine glycosylation sites follow: asparagine 151 and asparagine 190. Residues tyrosine 217–tryptophan 248 form a disordered region. Residues proline 218–proline 241 are compositionally biased toward polar residues. The 206-residue stretch at leucine 293–proline 498 folds into the Peptidase M12B domain. 11 disulfides stabilise this stretch: cysteine 369/cysteine 420, cysteine 395/cysteine 402, cysteine 414/cysteine 493, cysteine 453/cysteine 477, cysteine 521/cysteine 546, cysteine 532/cysteine 553, cysteine 541/cysteine 572, cysteine 566/cysteine 577, cysteine 601/cysteine 638, cysteine 605/cysteine 643, and cysteine 616/cysteine 628. Histidine 436 is a binding site for Zn(2+). Residue glutamate 437 is part of the active site. Residues histidine 440 and histidine 446 each coordinate Zn(2+). Residues histidine 589 to proline 644 form the TSP type-1 1 domain. Residues asparagine 745, asparagine 838, asparagine 865, and asparagine 909 are each glycosylated (N-linked (GlcNAc...) asparagine). 4 consecutive TSP type-1 domains span residues cysteine 931–alanine 990, cysteine 991–proline 1049, asparagine 1052–proline 1116, and alanine 1121–proline 1176. In terms of domain architecture, PLAC spans aspartate 1182 to serine 1219.

Zn(2+) serves as cofactor. In terms of processing, the precursor is cleaved by a furin endopeptidase. Post-translationally, glycosylated. Can be O-fucosylated by POFUT2 on a serine or a threonine residue found within the consensus sequence C1-X(2)-(S/T)-C2-G of the TSP type-1 repeat domains where C1 and C2 are the first and second cysteine residue of the repeat, respectively. Fucosylated repeats can then be further glycosylated by the addition of a beta-1,3-glucose residue by the glucosyltransferase, B3GALTL. Fucosylation mediates the efficient secretion of ADAMTS family members. Can also be C-glycosylated with one or two mannose molecules on tryptophan residues within the consensus sequence W-X-X-W of the TPRs, and N-glycosylated. These other glycosylations can also facilitate secretion.

It is found in the secreted. The protein localises to the extracellular space. The protein resides in the extracellular matrix. The chain is A disintegrin and metalloproteinase with thrombospondin motifs 18 (Adamts18) from Mus musculus (Mouse).